We begin with the raw amino-acid sequence, 349 residues long: Trans-enoyl reductase phmE (349 aa).

55–58 is a binding site for NADP(+); it reads CDWK. Position 143 to 150 (143 to 150) interacts with substrate; that stretch reads TGIGTMGL. Residues 182–185, Tyr200, and 247–248 contribute to the NADP(+) site; these read SPKN and LE. Residue 267-271 participates in substrate binding; the sequence is GMAIL. 336 to 337 is a binding site for NADP(+); that stretch reads VS.

Belongs to the zinc-containing alcohol dehydrogenase family. As to quaternary structure, monomer.

It participates in mycotoxin biosynthesis. Trans-enoyl reductase; part of the gene cluster that mediates the biosynthesis of the mycotoxins phomacins, leucine-derived cytochalasans with potent actin polymerization-inhibitory activities and monocot-specific antigerminative activities. The first step in the pathway is catalyzed by the hybrid PKS-NRPS phmA, assisted by the enoyl reductase phmE, that are responsible for fusion of the leucine precursor and the polyketide backbone to produce a 2-pyrrolidone intermediate. The polyketide synthase module (PKS) of phmA is responsible for the synthesis of the polyketide backbone and the downstream nonribosomal peptide synthetase (NRPS) amidates the carboxyl end of the polyketide with the leucine precursor. Because phmA lacks a designated enoylreductase (ER) domain, the required activity is provided the enoyl reductase phmE. Reduction by the hydrolyase phmG, followed by dehydration and intra-molecular Diels-Alder cyclization by the Diels-Alderase phmD then yield the required isoindolone-fused macrocycle. A number of oxidative steps catalyzed by the tailoring cytochrome P450 monooxygenase phmB, the FAD-linked oxidoreductase phmC and the short-chain dehydrogenase/reductase phmF, are further required to afford the final products, phomacin D and phomacin E. In Phaeosphaeria nodorum (strain SN15 / ATCC MYA-4574 / FGSC 10173) (Glume blotch fungus), this protein is Trans-enoyl reductase phmE.